A 384-amino-acid chain; its full sequence is Ceramide very long chain fatty acid hydroxylase SCS7 (384 aa).

Residues 1-197 (MSTNTSKTLE…NFLEPLTKTA (197 aa)) lie on the Cytoplasmic side of the membrane. The Cytochrome b5 heme-binding domain occupies 9-90 (LELFSKKTVQ…EDEYLIGYLA (82 aa)). Heme contacts are provided by His-45 and His-72. Residues 198–216 (WWVVPVAWLPVVVYHMGVA) traverse the membrane as a helical segment. Residues 217–221 (LKNMN) are Lumenal-facing. Residues 222-246 (QLFACFLFCVGVFVWTLIEYGLHRF) traverse the membrane as a helical segment. Residues His-244, His-249, His-268, His-271, and His-272 each contribute to the Zn(2+) site. At 247-284 (LFHFDDWLPESNIAFATHFLLHGCHHYLPMDKYRLVMP) the chain is on the cytoplasmic side. A helical transmembrane segment spans residues 285 to 302 (PTLFVILCAPFYKLVFAL). Topologically, residues 303–304 (LP) are lumenal. Residues 305–328 (LYWAYAGFAGGLFGYVCYDECHFF) traverse the membrane as a helical segment. His-326, His-330, His-345, His-348, and His-349 together coordinate Zn(2+). The Cytoplasmic portion of the chain corresponds to 329-384 (LHHSKLPPFMRKLKKYHLEHHYKNYQLGFGVTSWFWDEVFGTYLGPDAPLSKMKYE).

It belongs to the sterol desaturase family. SCS7 subfamily. Zn(2+) serves as cofactor.

The protein resides in the endoplasmic reticulum membrane. It catalyses the reaction an N-(1,2 saturated acyl)-(4R)-hydroxysphinganine + 2 Fe(II)-[cytochrome b5] + O2 + 2 H(+) = an N-(2R-hydroxyacyl)-4R-hydroxysphinganine + 2 Fe(III)-[cytochrome b5] + H2O. It carries out the reaction an N-(1,2-saturated acyl)sphinganine + 2 Fe(II)-[cytochrome b5] + O2 + 2 H(+) = an N-[(2'R)-hydroxyacyl]sphinganine + 2 Fe(III)-[cytochrome b5] + H2O. The catalysed reaction is N-hexacosanoyl-(4R)-hydroxysphinganine + 2 Fe(II)-[cytochrome b5] + O2 + 2 H(+) = N-(2-hydroxyhexacosanyl)-(4R)-hydroxysphinganine + 2 Fe(III)-[cytochrome b5] + H2O. Its pathway is sphingolipid metabolism. In terms of biological role, ceramide hydroxylase involved in the hydroxylation of sphingolipid-associated very long chain fatty acids. Postulated to hydroxylate the very long chain fatty acid of dihydroceramides and phytoceramides at C-2. This Saccharomyces cerevisiae (strain ATCC 204508 / S288c) (Baker's yeast) protein is Ceramide very long chain fatty acid hydroxylase SCS7.